Here is a 1323-residue protein sequence, read N- to C-terminus: Receptor tyrosine-protein kinase let-23 (1323 aa).

The N-terminal stretch at 1–20 is a signal peptide; the sequence is MRYPPSIGSILLIIPIFLTF. Over 21 to 818 the chain is Extracellular; sequence FGNSNAQLWK…DIASRQRKTR (798 aa). Residues Asn91 and Asn169 are each glycosylated (N-linked (GlcNAc...) asparagine). Disulfide bonds link Cys220–Cys228, Cys224–Cys236, Cys244–Cys251, Cys248–Cys262, Cys263–Cys271, Cys267–Cys279, Cys282–Cys291, Cys295–Cys322, Cys326–Cys337, Cys341–Cys356, and Cys359–Cys364. The N-linked (GlcNAc...) asparagine glycan is linked to Asn255. The N-linked (GlcNAc...) asparagine glycan is linked to Asn376. 20 disulfides stabilise this stretch: Cys520-Cys529, Cys524-Cys537, Cys540-Cys549, Cys553-Cys567, Cys570-Cys577, Cys574-Cys585, Cys588-Cys604, Cys608-Cys620, Cys623-Cys632, Cys627-Cys644, Cys647-Cys660, Cys670-Cys693, Cys696-Cys703, Cys700-Cys715, Cys717-Cys731, Cys735-Cys750, Cys753-Cys763, Cys757-Cys771, Cys774-Cys787, and Cys791-Cys805. An N-linked (GlcNAc...) asparagine glycan is attached at Asn561. N-linked (GlcNAc...) asparagine glycosylation occurs at Asn655. Asn746 is a glycosylation site (N-linked (GlcNAc...) asparagine). N-linked (GlcNAc...) asparagine glycosylation is present at Asn776. A helical membrane pass occupies residues 819-839; sequence MVIIGSVLFGFAVMFLFILLV. The Cytoplasmic segment spans residues 840-1323; sequence YWRCQRIGKK…EEVSQKETCL (484 aa). The Protein kinase domain maps to 885–1152; sequence TKLDKKLGAG…EFCKVPQLFL (268 aa). Residues 891-899 and Lys919 contribute to the ATP site; that span reads LGAGAFGTV. Residue Asp1010 is the Proton acceptor of the active site. Residues 1265 to 1289 show a composition bias toward polar residues; the sequence is GQTELSPSNGDYYNQPNTPSSSSGY. Positions 1265–1323 are disordered; the sequence is GQTELSPSNGDYYNQPNTPSSSSGYYNEPHLKTKKPETSEEAEAVQYENEEVSQKETCL. Over residues 1293-1302 the composition is skewed to basic and acidic residues; it reads PHLKTKKPET. A compositionally biased stretch (acidic residues) spans 1303–1315; that stretch reads SEEAEAVQYENEE.

This sequence belongs to the protein kinase superfamily. Tyr protein kinase family. EGF receptor subfamily. Expressed in vulval precursor cells (at protein level). Expressed in ALA neurons, 2 ventral head neurons, a single neuron in the tail, pharyngeal-intestinal valve and posterior arcade epithelial cells.

It localises to the apical cell membrane. The protein resides in the basolateral cell membrane. It carries out the reaction L-tyrosyl-[protein] + ATP = O-phospho-L-tyrosyl-[protein] + ADP + H(+). In terms of biological role, tyrosine-protein kinase receptor which, upon binding ligand lin-3, activates 2 signaling cascades: the let-60/Ras and MAP kinase signaling pathway and the let-60-independent phospholipase C-mediated Ca(2+) signaling pathway. Each pathway regulates distinct functions. By activating let-60/Ras, regulates larval development, induction of vulva cell precursors during vulva development, male spicule formation and posterior development of the epidermis. Probably by activating phospholipase plc-3 and inositol 1,4,5-trisphosphate receptor itr-1 signaling cascade downstream of ligand lin-3, plays a role in ovulation by promoting ovulatory gonadal sheath cell contractions. Probably by regulating neuronal transmission in ALA neurons, mediates, independently of let-60/Ras, the decrease in pharyngeal pumping and locomotion during the quiescent state that precedes each larval molt, downstream of lin-3 and upstream of plc-3. In Caenorhabditis elegans, this protein is Receptor tyrosine-protein kinase let-23.